Here is a 220-residue protein sequence, read N- to C-terminus: CDP-diacylglycerol--inositol 3-phosphatidyltransferase (220 aa).

Topologically, residues 1–20 (MSSNSTPEKVTAEHVLWYIP) are cytoplasmic. A helical membrane pass occupies residues 21–41 (NKIGYVRVITAALSFFVMKNH). The Lumenal portion of the chain corresponds to 42–45 (PTAF). A helical transmembrane segment spans residues 46 to 66 (TWLYSTSCLLDALDGTMARKY). Residues Asp-56 and Asp-59 each coordinate Mg(2+). Residues Gly-60, Arg-64, and Ser-70 each contribute to the a CDP-1,2-diacyl-sn-glycerol site. The Cytoplasmic segment spans residues 67 to 75 (NQVSSLGAV). The helical transmembrane segment at 76–96 (LDMVTDRSSTAGLMCFLCVQY) threads the bilayer. The Mg(2+) site is built by Asp-77 and Asp-81. Asp-81 (proton acceptor) is an active-site residue. Topologically, residues 97–98 (PQ) are lumenal. Residues 99 to 119 (WCVFFQLMLGLDITSHYMHMY) form a helical membrane-spanning segment. Topologically, residues 120–145 (ASLSAGKTSHKSVGEGESRLLHLYYT) are cytoplasmic. The helical transmembrane segment at 146-166 (RRDVLFTICAFNELFYAGLYL) threads the bilayer. Residues 167 to 170 (QLFS) lie on the Lumenal side of the membrane. The helical transmembrane segment at 171 to 191 (NSATFGKWTTIISFPGYVFKQ) threads the bilayer. Over 192-220 (TANVVQLKRAALILADNDAKNANEKNKTY) the chain is Cytoplasmic.

This sequence belongs to the CDP-alcohol phosphatidyltransferase class-I family. Mn(2+) is required as a cofactor. Mg(2+) serves as cofactor.

The protein resides in the microsome membrane. It localises to the endoplasmic reticulum membrane. It is found in the golgi apparatus membrane. Its subcellular location is the mitochondrion outer membrane. The catalysed reaction is a CDP-1,2-diacyl-sn-glycerol + myo-inositol = a 1,2-diacyl-sn-glycero-3-phospho-(1D-myo-inositol) + CMP + H(+). In terms of biological role, catalyzes the synthesis of phosphatidylinositol (PtdIns). The protein is CDP-diacylglycerol--inositol 3-phosphatidyltransferase of Saccharomyces cerevisiae (strain ATCC 204508 / S288c) (Baker's yeast).